Reading from the N-terminus, the 97-residue chain is Peptide Y (97 aa).

Residues 1 to 28 (MANMLRSWMMLAALAVCLLVCLSSFADA) form the signal peptide. A Tyrosine amide modification is found at Tyr-64. A propeptide spans 68-97 (STPEQAVAWLLFGADSSQDAEPRLDYSDQW) (C-terminal extension).

This sequence belongs to the NPY family.

Its subcellular location is the secreted. The chain is Peptide Y from Dicentrarchus labrax (European seabass).